An 85-amino-acid chain; its full sequence is UPF0473 protein CPR_1590 (85 aa).

This sequence belongs to the UPF0473 family.

The polypeptide is UPF0473 protein CPR_1590 (Clostridium perfringens (strain SM101 / Type A)).